Consider the following 402-residue polypeptide: Putative F-box protein At3g23960 (402 aa).

Residues 1-23 form a disordered region; that stretch reads MRSRQLHNVSEDRETLSRRNKRS. Residues 26 to 73 enclose the F-box domain; it reads SLNGHIPIDLLIEIFLKLPVKSIATCRSVSKFWTYVLGRQDFTELFLT.

This chain is Putative F-box protein At3g23960, found in Arabidopsis thaliana (Mouse-ear cress).